The chain runs to 158 residues: Transcription elongation factor GreA (158 aa).

Residues 3–75 adopt a coiled-coil conformation; it reads TEKTYPMTQE…TQLENMIRNA (73 aa).

It belongs to the GreA/GreB family.

Its function is as follows. Necessary for efficient RNA polymerase transcription elongation past template-encoded arresting sites. The arresting sites in DNA have the property of trapping a certain fraction of elongating RNA polymerases that pass through, resulting in locked ternary complexes. Cleavage of the nascent transcript by cleavage factors such as GreA or GreB allows the resumption of elongation from the new 3'terminus. GreA releases sequences of 2 to 3 nucleotides. The sequence is that of Transcription elongation factor GreA from Bacillus cytotoxicus (strain DSM 22905 / CIP 110041 / 391-98 / NVH 391-98).